The primary structure comprises 129 residues: Gem-associated protein 7 (129 aa).

M1 carries the post-translational modification N-acetylmethionine. Positions 1-31 constitute an SUZ-C domain; it reads MQSPLTIPVPVPVLRLPRGPDGFSRGFASDG. A Sm domain is found at 63–129; sequence RYLRSLLAMV…SDIISYSFKL (67 aa).

The protein belongs to the gemin-7 family. In terms of assembly, part of the core SMN complex that contains SMN1, GEMIN2/SIP1, DDX20/GEMIN3, GEMIN4, GEMIN5, GEMIN6, GEMIN7, GEMIN8 and STRAP/UNRIP. Part of the SMN-Sm complex that contains SMN1, GEMIN2/SIP1, DDX20/GEMIN3, GEMIN4, GEMIN5, GEMIN6, GEMIN7, GEMIN8, STRAP/UNRIP and the Sm proteins SNRPB, SNRPD1, SNRPD2, SNRPD3, SNRPE, SNRPF and SNRPG. Interacts with GEMIN6; the interaction is direct. Interacts with STRAP/UNRIP; the interaction is direct. Interacts with GEMIN8; the interaction is direct. Interacts with SNRPB, SNRPD2, SNRPD3 and SNRPE; the interaction is direct.

The protein localises to the nucleus. It localises to the nucleoplasm. It is found in the gem. The protein resides in the cytoplasm. The SMN complex catalyzes the assembly of small nuclear ribonucleoproteins (snRNPs), the building blocks of the spliceosome, and thereby plays an important role in the splicing of cellular pre-mRNAs. Most spliceosomal snRNPs contain a common set of Sm proteins SNRPB, SNRPD1, SNRPD2, SNRPD3, SNRPE, SNRPF and SNRPG that assemble in a heptameric protein ring on the Sm site of the small nuclear RNA to form the core snRNP (Sm core). In the cytosol, the Sm proteins SNRPD1, SNRPD2, SNRPE, SNRPF and SNRPG are trapped in an inactive 6S pICln-Sm complex by the chaperone CLNS1A that controls the assembly of the core snRNP. To assemble core snRNPs, the SMN complex accepts the trapped 5Sm proteins from CLNS1A forming an intermediate. Binding of snRNA inside 5Sm triggers eviction of the SMN complex, thereby allowing binding of SNRPD3 and SNRPB to complete assembly of the core snRNP. This is Gem-associated protein 7 (Gemin7) from Mus musculus (Mouse).